The chain runs to 344 residues: Mitochondrial substrate carrier family protein D (344 aa).

The Mitochondrial intermembrane segment spans residues 1 to 22 (MDSTKTNNKWAAAGILNSVGKD). Solcar repeat units follow at residues 17–104 (NSVG…CQSY), 119–212 (IPYH…MKRK), and 239–327 (VPAW…TRNL). Residues 23–43 (FVAGSVGGMSSIMAGHPFDTI) traverse the membrane as a helical segment. Residues 44-75 (KVMLQDASGNLPKFKNGFQALKYIMKVDGIKG) lie on the Mitochondrial matrix side of the membrane. A helical membrane pass occupies residues 76-96 (IYRGLSVPLFSVSFTNSVFFA). Topologically, residues 97–116 (TNNFCQSYFHPPCKDENGED) are mitochondrial intermembrane. Residues 117–137 (ILIPYHKAAAAGAIAGGVISL) form a helical membrane-spanning segment. The Mitochondrial matrix portion of the chain corresponds to 138–186 (LITPRDLVKSKLQVQCRPFGSTNVSLQYKGPIDVIRQTIKRDGIKGMFK). Residues 187-207 (GIRSTFCRDIPGDAVYFVVYE) form a helical membrane-spanning segment. The Mitochondrial intermembrane portion of the chain corresponds to 208 to 238 (FMKRKLLALSKNNNNNNNNNDNNDNSSPKAG). Residues 239–259 (VPAWVAIGAGGCAGMSFWMSI) traverse the membrane as a helical segment. Residues 260–301 (YPMDVVKTRIQTQPDHLPPQYTSVLQTITKIYREEGISVFFR) lie on the Mitochondrial matrix side of the membrane. Residues 302-321 (GFSATILRAFPTSAVNFLMY) form a helical membrane-spanning segment. Over 322-344 (ETTRNLLNSKDPFYNNNDHYNAE) the chain is Mitochondrial intermembrane.

Belongs to the mitochondrial carrier (TC 2.A.29) family.

The protein localises to the mitochondrion inner membrane. In terms of biological role, calcium-dependent mitochondrial solute carrier. Mitochondrial solute carriers shuttle metabolites, nucleotides, and cofactors through the mitochondrial inner membrane. This Dictyostelium discoideum (Social amoeba) protein is Mitochondrial substrate carrier family protein D (mcfD).